The following is a 602-amino-acid chain: Elongation factor 4 (602 aa).

In terms of domain architecture, tr-type G spans 2–184; it reads DHIRNFSIIA…AVIARMPPPK (183 aa). GTP is bound by residues 14-19 and 131-134; these read DHGKST and NKMD.

This sequence belongs to the TRAFAC class translation factor GTPase superfamily. Classic translation factor GTPase family. LepA subfamily.

The protein resides in the cell inner membrane. It carries out the reaction GTP + H2O = GDP + phosphate + H(+). In terms of biological role, required for accurate and efficient protein synthesis under certain stress conditions. May act as a fidelity factor of the translation reaction, by catalyzing a one-codon backward translocation of tRNAs on improperly translocated ribosomes. Back-translocation proceeds from a post-translocation (POST) complex to a pre-translocation (PRE) complex, thus giving elongation factor G a second chance to translocate the tRNAs correctly. Binds to ribosomes in a GTP-dependent manner. The chain is Elongation factor 4 from Leptothrix cholodnii (strain ATCC 51168 / LMG 8142 / SP-6) (Leptothrix discophora (strain SP-6)).